The sequence spans 241 residues: Chloride intracellular channel protein 1 (241 aa).

Residue A2 is modified to N-acetylalanine. The required for insertion into the membrane stretch occupies residues 2–90 (AEEQPQVELF…EEFLEAVLCP (89 aa)). Residue K13 is modified to N6-acetyllysine. C24 serves as a coordination point for glutathione. C24 carries the S-glutathionyl cysteine; alternate modification. The short motif at 24 to 27 (CPFS) is the G-site element. Cysteines 24 and 59 form a disulfide. The helical transmembrane segment at 26–46 (FSQRLFMVLWLKGVTFNVTTV) threads the bilayer. Positions 64 and 77 each coordinate glutathione. The region spanning 93-233 (YPKLAALNPE…PDDEEIELAY (141 aa)) is the GST C-terminal domain. At K119 the chain carries N6-acetyllysine. Position 121 is a phosphoserine (S121). K131 carries the post-translational modification N6-acetyllysine. Phosphoserine is present on residues S156 and S211. Y233 bears the Phosphotyrosine mark.

Belongs to the chloride channel CLIC family. As to quaternary structure, monomer. Homodimer (in vitro). Interacts with TRAPPC2. Dimerization requires a conformation change that leads to the exposure of a large hydrophobic surface. In vivo, this may lead to membrane insertion. Interacts with AKAP9. Hydrogen peroxide treatment causes a conformation change, leading to dimerization and formation of an intramolecular disulfide bond between Cys-24 and Cys-59. Expression is prominent in heart, placenta, liver, kidney and pancreas.

It localises to the nucleus. The protein resides in the nucleus membrane. It is found in the cytoplasm. The protein localises to the cell membrane. Its subcellular location is the endoplasmic reticulum. It catalyses the reaction L-dehydroascorbate + 2 glutathione = glutathione disulfide + L-ascorbate. The enzyme catalyses chloride(in) = chloride(out). It carries out the reaction iodide(out) = iodide(in). The catalysed reaction is thiocyanate(in) = thiocyanate(out). It catalyses the reaction nitrate(in) = nitrate(out). The enzyme catalyses bromide(in) = bromide(out). It carries out the reaction fluoride(in) = fluoride(out). With respect to regulation, the oxidoreductase activity is inhibited by rapamycin, amphotericin B and IAA-94. The channel conductance is regulated by pH and redox membrane potential. Inhibited by IAA-94. Functionally, in the soluble state, catalyzes glutaredoxin-like thiol disulfide exchange reactions with reduced glutathione as electron donor. Reduces selenite and dehydroascorbate and may act as an antioxidant during oxidative stress response. Can insert into membranes and form voltage-dependent multi-ion conductive channels. Membrane insertion seems to be redox-regulated and may occur only under oxidizing conditions. Involved in regulation of the cell cycle. The protein is Chloride intracellular channel protein 1 of Homo sapiens (Human).